A 423-amino-acid chain; its full sequence is Carboxypeptidase B2 (423 aa).

The signal sequence occupies residues 1 to 22 (MKLCSLAVLVPIVLFCEQHVFA). The propeptide at 23-114 (FQSGQVLAAL…QISNDTVSPR (92 aa)) is activation peptide. N-linked (GlcNAc...) asparagine glycosylation is found at Asn-44, Asn-73, and Asn-85. A glycan (N-linked (GlcNAc...) (complex) asparagine) is linked at Asn-108. Residues 122–419 (QYHSLNEIYS…AAVSKIAWHV (298 aa)) enclose the Peptidase M14 domain. A disulfide bridge links Cys-178 with Cys-191. Residues His-181 and Glu-184 each coordinate Zn(2+). Residues 181–184 (HARE) and Arg-239 contribute to the substrate site. Asn-241 carries an N-linked (GlcNAc...) asparagine; partial glycan. Cystine bridges form between Cys-250/Cys-274 and Cys-265/Cys-279. 256–257 (NR) is a binding site for substrate. His-310 is a Zn(2+) binding site. Substrate is bound by residues 311 to 312 (SY) and Tyr-363. Glu-385 serves as the catalytic Proton donor/acceptor.

The protein belongs to the peptidase M14 family. Zn(2+) serves as cofactor. Post-translationally, N-glycosylated. N-glycan at Asn-108: Hex5HexNAc4. Plasma; synthesized in the liver.

Its subcellular location is the secreted. The enzyme catalyses Release of C-terminal Arg and Lys from a polypeptide.. With respect to regulation, TAFI/CPB2 is unique among carboxypeptidases in that it spontaneously inactivates with a short half-life, a property that is crucial for its role in controlling blood clot lysis. The zymogen is stabilized by interactions with the activation peptide. Release of the activation peptide increases a dynamic flap mobility and in time this leads to conformational changes that disrupt the catalytic site and expose a cryptic thrombin-cleavage site present at Arg-324. Cleaves C-terminal arginine or lysine residues from biologically active peptides such as kinins or anaphylatoxins in the circulation thereby regulating their activities. Down-regulates fibrinolysis by removing C-terminal lysine residues from fibrin that has already been partially degraded by plasmin. The chain is Carboxypeptidase B2 (CPB2) from Homo sapiens (Human).